The chain runs to 270 residues: Protoheme IX farnesyltransferase (270 aa).

Transmembrane regions (helical) follow at residues 13-30, 33-53, 95-115, 129-149, 156-176, 207-227, and 249-269; these read LALL…LVPD, HATL…GSAL, LLVL…ALAW, LALA…WTLA, YRII…FWLF, LWLG…LMAP, and EATL…ALLL.

The protein belongs to the UbiA prenyltransferase family. Protoheme IX farnesyltransferase subfamily.

It is found in the cell inner membrane. The catalysed reaction is heme b + (2E,6E)-farnesyl diphosphate + H2O = Fe(II)-heme o + diphosphate. Its pathway is porphyrin-containing compound metabolism; heme O biosynthesis; heme O from protoheme: step 1/1. In terms of biological role, converts heme B (protoheme IX) to heme O by substitution of the vinyl group on carbon 2 of heme B porphyrin ring with a hydroxyethyl farnesyl side group. The polypeptide is Protoheme IX farnesyltransferase (Geobacter sulfurreducens (strain ATCC 51573 / DSM 12127 / PCA)).